The following is a 413-amino-acid chain: Transmembrane protein 184A (413 aa).

7 helical membrane passes run 47–69 (WLFL…ALVL), 93–113 (LLLI…LLGD), 130–150 (FVIY…GAIM), 187–207 (LQFC…QAFG), 223–243 (VTLI…LFYF), 258–278 (FLTI…LAIL), and 300–320 (LAAG…SVAL). Residues 372–413 (QHYTQQATHEAPRPGTHPSGGSGGSRKSRSLEKRMLIPSEDL) are disordered.

Belongs to the TMEM184 family. Expressed in vascular cells (at protein level).

It is found in the cell membrane. The protein localises to the cytoplasm. The protein resides in the perinuclear region. It localises to the cytoplasmic vesicle membrane. Its subcellular location is the early endosome membrane. It is found in the endosome. The protein localises to the cytoplasmic vesicle. The protein resides in the secretory vesicle membrane. Its function is as follows. Acts as a heparin receptor in vascular cells. May be involved in vesicle transport in exocrine cells and Sertoli cells. The polypeptide is Transmembrane protein 184A (TMEM184A) (Homo sapiens (Human)).